We begin with the raw amino-acid sequence, 202 residues long: NADH-quinone oxidoreductase subunit B (202 aa).

Residues Cys-81, Cys-82, Cys-146, and Cys-176 each coordinate [4Fe-4S] cluster.

The protein belongs to the complex I 20 kDa subunit family. In terms of assembly, NDH-1 is composed of 14 different subunits. Subunits NuoB, C, D, E, F, and G constitute the peripheral sector of the complex. It depends on [4Fe-4S] cluster as a cofactor.

It localises to the cell inner membrane. The catalysed reaction is a quinone + NADH + 5 H(+)(in) = a quinol + NAD(+) + 4 H(+)(out). Its function is as follows. NDH-1 shuttles electrons from NADH, via FMN and iron-sulfur (Fe-S) centers, to quinones in the respiratory chain. The immediate electron acceptor for the enzyme in this species is believed to be ubiquinone. Couples the redox reaction to proton translocation (for every two electrons transferred, four hydrogen ions are translocated across the cytoplasmic membrane), and thus conserves the redox energy in a proton gradient. The chain is NADH-quinone oxidoreductase subunit B from Bradyrhizobium diazoefficiens (strain JCM 10833 / BCRC 13528 / IAM 13628 / NBRC 14792 / USDA 110).